The sequence spans 471 residues: Probable ribonuclease FAU-1 (471 aa).

The protein belongs to the FAU-1 family.

Its function is as follows. Probable RNase involved in rRNA stability through maturation and/or degradation of precursor rRNAs. Binds to RNA in loop regions with AU-rich sequences. This Aeropyrum pernix (strain ATCC 700893 / DSM 11879 / JCM 9820 / NBRC 100138 / K1) protein is Probable ribonuclease FAU-1.